The primary structure comprises 486 residues: Glutamyl-tRNA(Gln) amidotransferase subunit A (486 aa).

Active-site charge relay system residues include Lys-74 and Ser-149. The active-site Acyl-ester intermediate is Ser-173.

The protein belongs to the amidase family. GatA subfamily. In terms of assembly, heterotrimer of A, B and C subunits.

The enzyme catalyses L-glutamyl-tRNA(Gln) + L-glutamine + ATP + H2O = L-glutaminyl-tRNA(Gln) + L-glutamate + ADP + phosphate + H(+). Functionally, allows the formation of correctly charged Gln-tRNA(Gln) through the transamidation of misacylated Glu-tRNA(Gln) in organisms which lack glutaminyl-tRNA synthetase. The reaction takes place in the presence of glutamine and ATP through an activated gamma-phospho-Glu-tRNA(Gln). The sequence is that of Glutamyl-tRNA(Gln) amidotransferase subunit A from Prochlorococcus marinus (strain NATL2A).